Here is a 1032-residue protein sequence, read N- to C-terminus: Exportin-T (1032 aa).

It belongs to the exportin family.

Its subcellular location is the nucleus. It localises to the cytoplasm. TRNA nucleus export receptor which facilitates tRNA translocation across the nuclear pore complex. Involved in pre-tRNA splicing, probably by affecting the interaction of pre-tRNA with splicing endonuclease. The sequence is that of Exportin-T (los1) from Aspergillus fumigatus (strain CBS 144.89 / FGSC A1163 / CEA10) (Neosartorya fumigata).